A 302-amino-acid chain; its full sequence is UTP--glucose-1-phosphate uridylyltransferase (302 aa).

It belongs to the UDPGP type 2 family. As to quaternary structure, homotetramer or homopentamer. Requires Mg(2+) as cofactor.

The catalysed reaction is alpha-D-glucose 1-phosphate + UTP + H(+) = UDP-alpha-D-glucose + diphosphate. Functionally, may play a role in stationary phase survival. The chain is UTP--glucose-1-phosphate uridylyltransferase (galU) from Escherichia coli O157:H7.